The chain runs to 93 residues: RNA-binding protein Hfq (93 aa).

The region spanning 9-68 (DPFLNALRRERVPVSIYLVNGIKLQGQVESFDQFVILLKNTVSQMVYKHAISTVVPARPF) is the Sm domain. Positions 70 to 93 (VNSHTAAPSPAGGFNGQQDDNNDQ) are disordered.

Belongs to the Hfq family. As to quaternary structure, homohexamer.

In terms of biological role, RNA chaperone that binds small regulatory RNA (sRNAs) and mRNAs to facilitate mRNA translational regulation in response to envelope stress, environmental stress and changes in metabolite concentrations. Also binds with high specificity to tRNAs. The polypeptide is RNA-binding protein Hfq (Shewanella sediminis (strain HAW-EB3)).